The sequence spans 469 residues: Ribulose bisphosphate carboxylase large chain (469 aa).

Lys8 carries the post-translational modification N6,N6,N6-trimethyllysine. Residues Asn117 and Thr167 each contribute to the substrate site. Lys169 functions as the Proton acceptor in the catalytic mechanism. Lys171 serves as a coordination point for substrate. Residues Lys195, Asp197, and Glu198 each contribute to the Mg(2+) site. Lys195 carries the N6-carboxylysine modification. His288 acts as the Proton acceptor in catalysis. Substrate is bound by residues Arg289, His321, and Ser373.

It belongs to the RuBisCO large chain family. Type I subfamily. In terms of assembly, heterohexadecamer of 8 large chains and 8 small chains; disulfide-linked. The disulfide link is formed within the large subunit homodimers. It depends on Mg(2+) as a cofactor. The disulfide bond which can form in the large chain dimeric partners within the hexadecamer appears to be associated with oxidative stress and protein turnover.

It localises to the plastid. Its subcellular location is the chloroplast. It catalyses the reaction 2 (2R)-3-phosphoglycerate + 2 H(+) = D-ribulose 1,5-bisphosphate + CO2 + H2O. The catalysed reaction is D-ribulose 1,5-bisphosphate + O2 = 2-phosphoglycolate + (2R)-3-phosphoglycerate + 2 H(+). Its function is as follows. RuBisCO catalyzes two reactions: the carboxylation of D-ribulose 1,5-bisphosphate, the primary event in carbon dioxide fixation, as well as the oxidative fragmentation of the pentose substrate in the photorespiration process. Both reactions occur simultaneously and in competition at the same active site. The protein is Ribulose bisphosphate carboxylase large chain of Akania bidwillii (Turnipwood).